Consider the following 149-residue polypeptide: Arginine repressor (149 aa).

This sequence belongs to the ArgR family.

Its subcellular location is the cytoplasm. Its pathway is amino-acid biosynthesis; L-arginine biosynthesis [regulation]. Regulates arginine biosynthesis genes. The sequence is that of Arginine repressor from Bacillus pumilus (strain SAFR-032).